The sequence spans 99 residues: MAEKDIDKLLSLTDSKYRLSVVTAKRALQLRSGAPSVLPVEQRVRTHNLVTQAMRELATGQLTVGTNLIDEQRFHQDYVRQRQAQLQAQLNAERERERD.

Belongs to the RNA polymerase subunit omega family. As to quaternary structure, the RNAP catalytic core consists of 2 alpha, 1 beta, 1 beta' and 1 omega subunit. When a sigma factor is associated with the core the holoenzyme is formed, which can initiate transcription.

The catalysed reaction is RNA(n) + a ribonucleoside 5'-triphosphate = RNA(n+1) + diphosphate. Functionally, promotes RNA polymerase assembly. Latches the N- and C-terminal regions of the beta' subunit thereby facilitating its interaction with the beta and alpha subunits. The polypeptide is DNA-directed RNA polymerase subunit omega (rpoZ) (Deinococcus radiodurans (strain ATCC 13939 / DSM 20539 / JCM 16871 / CCUG 27074 / LMG 4051 / NBRC 15346 / NCIMB 9279 / VKM B-1422 / R1)).